We begin with the raw amino-acid sequence, 269 residues long: C-type lectin domain family 1 member A (269 aa).

The Cytoplasmic portion of the chain corresponds to 1 to 51 (MQAKYSSTRDMLDDDDTTISLYSGTSTVTRRAEPRHSENGTPSSVWRPVAL). Residues 52 to 72 (TLLTLCLVLLVGLAALGLVFF) traverse the membrane as a helical; Signal-anchor for type II membrane protein segment. Over 73-269 (QFYQLSNIQQ…AGRVVPGELQ (197 aa)) the chain is Extracellular. N-linked (GlcNAc...) asparagine glycans are attached at residues Asn-94, Asn-126, Asn-168, and Asn-202. A C-type lectin domain is found at 143-257 (YGDKCYQFYK…CKELRRCACE (115 aa)). 2 cysteine pairs are disulfide-bonded: Cys-164–Cys-256 and Cys-235–Cys-248.

It is found in the membrane. This Mus musculus (Mouse) protein is C-type lectin domain family 1 member A (Clec1a).